Here is a 603-residue protein sequence, read N- to C-terminus: DNA-directed RNA polymerase subunit beta' N-terminal section (603 aa).

Zn(2+) is bound by residues Cys283, Cys285, Cys329, and Cys332.

This sequence belongs to the RNA polymerase beta' chain family. RpoC1 subfamily. In terms of assembly, in plastids the minimal PEP RNA polymerase catalytic core is composed of four subunits: alpha, beta, beta', and beta''. When a (nuclear-encoded) sigma factor is associated with the core the holoenzyme is formed, which can initiate transcription. The cofactor is Zn(2+).

Its subcellular location is the plastid. The protein localises to the chloroplast. It catalyses the reaction RNA(n) + a ribonucleoside 5'-triphosphate = RNA(n+1) + diphosphate. Functionally, DNA-dependent RNA polymerase catalyzes the transcription of DNA into RNA using the four ribonucleoside triphosphates as substrates. This chain is DNA-directed RNA polymerase subunit beta' N-terminal section (rpoC1A), found in Chlamydomonas reinhardtii (Chlamydomonas smithii).